The primary structure comprises 851 residues: Alanine--tRNA ligase (851 aa).

Zn(2+) is bound by residues His-535, His-539, Cys-637, and His-641.

This sequence belongs to the class-II aminoacyl-tRNA synthetase family. Zn(2+) serves as cofactor.

It localises to the cytoplasm. The enzyme catalyses tRNA(Ala) + L-alanine + ATP = L-alanyl-tRNA(Ala) + AMP + diphosphate. In terms of biological role, catalyzes the attachment of alanine to tRNA(Ala) in a two-step reaction: alanine is first activated by ATP to form Ala-AMP and then transferred to the acceptor end of tRNA(Ala). Also edits incorrectly charged Ser-tRNA(Ala) and Gly-tRNA(Ala) via its editing domain. This Acholeplasma laidlawii (strain PG-8A) protein is Alanine--tRNA ligase.